The sequence spans 359 residues: F-box protein At1g10895 (359 aa).

The 47-residue stretch at 2 to 48 (TTMSDLDEIMVAEILCRTPMTCLKTVRSVCKKWNALSKKWFFFGKAK) folds into the F-box domain.

This chain is F-box protein At1g10895, found in Arabidopsis thaliana (Mouse-ear cress).